Reading from the N-terminus, the 119-residue chain is Large ribosomal subunit protein uL14 (119 aa).

It belongs to the universal ribosomal protein uL14 family. In terms of assembly, part of the 50S ribosomal subunit. Forms a cluster with proteins L3 and L19. In the 70S ribosome, L14 and L19 interact and together make contacts with the 16S rRNA in bridges B5 and B8.

In terms of biological role, binds to 23S rRNA. Forms part of two intersubunit bridges in the 70S ribosome. This Anaplasma marginale (strain St. Maries) protein is Large ribosomal subunit protein uL14.